The following is a 131-amino-acid chain: Small ribosomal subunit protein uS11 (131 aa).

The segment covering 1–15 (MAAQKVKKTRRRKER) has biased composition (basic residues). Residues 1 to 23 (MAAQKVKKTRRRKERKNVEHGAA) form a disordered region.

This sequence belongs to the universal ribosomal protein uS11 family. As to quaternary structure, part of the 30S ribosomal subunit. Interacts with proteins S7 and S18. Binds to IF-3.

Located on the platform of the 30S subunit, it bridges several disparate RNA helices of the 16S rRNA. Forms part of the Shine-Dalgarno cleft in the 70S ribosome. In Clostridium perfringens (strain 13 / Type A), this protein is Small ribosomal subunit protein uS11.